The following is a 242-amino-acid chain: Probable transcriptional regulatory protein NMA1902 (242 aa).

Belongs to the TACO1 family.

It localises to the cytoplasm. This Neisseria meningitidis serogroup A / serotype 4A (strain DSM 15465 / Z2491) protein is Probable transcriptional regulatory protein NMA1902.